The chain runs to 155 residues: Transcriptional repressor NrdR (155 aa).

The segment at 3–34 (CPFCGHSSTQVLDSRVSEDGDTVRRRRRCEAC) is a zinc-finger region. Residues 49–139 (PAIVKKNGSR…VYRSFEDVSE (91 aa)) form the ATP-cone domain.

Belongs to the NrdR family. The cofactor is Zn(2+).

Functionally, negatively regulates transcription of bacterial ribonucleotide reductase nrd genes and operons by binding to NrdR-boxes. The chain is Transcriptional repressor NrdR from Cupriavidus metallidurans (strain ATCC 43123 / DSM 2839 / NBRC 102507 / CH34) (Ralstonia metallidurans).